Consider the following 253-residue polypeptide: Ubiquinone/menaquinone biosynthesis C-methyltransferase UbiE (253 aa).

Residues Thr-76, Asp-97, 125-126 (NA), and Ser-142 contribute to the S-adenosyl-L-methionine site.

This sequence belongs to the class I-like SAM-binding methyltransferase superfamily. MenG/UbiE family.

The enzyme catalyses a 2-demethylmenaquinol + S-adenosyl-L-methionine = a menaquinol + S-adenosyl-L-homocysteine + H(+). The catalysed reaction is a 2-methoxy-6-(all-trans-polyprenyl)benzene-1,4-diol + S-adenosyl-L-methionine = a 5-methoxy-2-methyl-3-(all-trans-polyprenyl)benzene-1,4-diol + S-adenosyl-L-homocysteine + H(+). Its pathway is quinol/quinone metabolism; menaquinone biosynthesis; menaquinol from 1,4-dihydroxy-2-naphthoate: step 2/2. It participates in cofactor biosynthesis; ubiquinone biosynthesis. In terms of biological role, methyltransferase required for the conversion of demethylmenaquinol (DMKH2) to menaquinol (MKH2) and the conversion of 2-polyprenyl-6-methoxy-1,4-benzoquinol (DDMQH2) to 2-polyprenyl-3-methyl-6-methoxy-1,4-benzoquinol (DMQH2). The sequence is that of Ubiquinone/menaquinone biosynthesis C-methyltransferase UbiE from Xylella fastidiosa (strain M23).